The primary structure comprises 90 residues: MGQIQYSEKYFDDTYEYRHVVLPPEVAKLLPKNRLLSENEWRAIGVQQSRGWVHYAIHRPEPHIMLFRRPLNFQQQQEAAAAAAAQMLPK.

This sequence belongs to the CKS family.

Binds to the catalytic subunit of the cyclin dependent kinases and is essential for their biological function. This Oryza sativa subsp. indica (Rice) protein is Cyclin-dependent kinases regulatory subunit 1 (CKS1).